Reading from the N-terminus, the 104-residue chain is Large ribosomal subunit protein bL21 (104 aa).

This sequence belongs to the bacterial ribosomal protein bL21 family. As to quaternary structure, part of the 50S ribosomal subunit. Contacts protein L20.

This protein binds to 23S rRNA in the presence of protein L20. In Streptococcus thermophilus (strain ATCC BAA-491 / LMD-9), this protein is Large ribosomal subunit protein bL21.